Consider the following 85-residue polypeptide: METVLSFSAIAVAIIVGLCALGTAVGFAVLGGKFLEGAARQPEMAPMLQVKMFIIAGLLDAVPMIGIVIALLFTFANPFVGQLAG.

Transmembrane regions (helical) follow at residues 10 to 30 (IAVAIIVGLCALGTAVGFAVL) and 53 to 73 (FIIAGLLDAVPMIGIVIALLF).

The protein belongs to the ATPase C chain family. F-type ATPases have 2 components, F(1) - the catalytic core - and F(0) - the membrane proton channel. F(1) has five subunits: alpha(3), beta(3), gamma(1), delta(1), epsilon(1). F(0) has three main subunits: a(1), b(2) and c(10-14). The alpha and beta chains form an alternating ring which encloses part of the gamma chain. F(1) is attached to F(0) by a central stalk formed by the gamma and epsilon chains, while a peripheral stalk is formed by the delta and b chains.

The protein localises to the cell inner membrane. F(1)F(0) ATP synthase produces ATP from ADP in the presence of a proton or sodium gradient. F-type ATPases consist of two structural domains, F(1) containing the extramembraneous catalytic core and F(0) containing the membrane proton channel, linked together by a central stalk and a peripheral stalk. During catalysis, ATP synthesis in the catalytic domain of F(1) is coupled via a rotary mechanism of the central stalk subunits to proton translocation. In terms of biological role, key component of the F(0) channel; it plays a direct role in translocation across the membrane. A homomeric c-ring of between 10-14 subunits forms the central stalk rotor element with the F(1) delta and epsilon subunits. The chain is ATP synthase subunit c from Vibrio vulnificus (strain CMCP6).